A 361-amino-acid polypeptide reads, in one-letter code: Phospho-N-acetylmuramoyl-pentapeptide-transferase (361 aa).

A run of 10 helical transmembrane segments spans residues 27–47 (GAMV…IDHL), 72–92 (TPTM…LLWA), 94–114 (LHNP…FVGF), 133–153 (LRLA…IWAG), 169–189 (FAIN…VGAG), 200–220 (GLAI…AYLV), 240–260 (LAVL…FNAP), 264–284 (IFMG…IAVA), 289–309 (IVLA…IVQV), and 338–358 (QIVI…LSTL).

The protein belongs to the glycosyltransferase 4 family. MraY subfamily. Requires Mg(2+) as cofactor.

Its subcellular location is the cell inner membrane. The catalysed reaction is UDP-N-acetyl-alpha-D-muramoyl-L-alanyl-gamma-D-glutamyl-meso-2,6-diaminopimeloyl-D-alanyl-D-alanine + di-trans,octa-cis-undecaprenyl phosphate = di-trans,octa-cis-undecaprenyl diphospho-N-acetyl-alpha-D-muramoyl-L-alanyl-D-glutamyl-meso-2,6-diaminopimeloyl-D-alanyl-D-alanine + UMP. The protein operates within cell wall biogenesis; peptidoglycan biosynthesis. In terms of biological role, catalyzes the initial step of the lipid cycle reactions in the biosynthesis of the cell wall peptidoglycan: transfers peptidoglycan precursor phospho-MurNAc-pentapeptide from UDP-MurNAc-pentapeptide onto the lipid carrier undecaprenyl phosphate, yielding undecaprenyl-pyrophosphoryl-MurNAc-pentapeptide, known as lipid I. The protein is Phospho-N-acetylmuramoyl-pentapeptide-transferase of Afipia carboxidovorans (strain ATCC 49405 / DSM 1227 / KCTC 32145 / OM5) (Oligotropha carboxidovorans).